A 29-amino-acid chain; its full sequence is Glucagon (29 aa).

The protein belongs to the glucagon family.

The protein localises to the secreted. Functionally, glucagon plays a key role in glucose metabolism and homeostasis. Regulates blood glucose by increasing gluconeogenesis and decreasing glycolysis. The polypeptide is Glucagon (GCG) (Struthio camelus (Common ostrich)).